Consider the following 293-residue polypeptide: Dehydrodolichyl diphosphate synthase complex subunit NUS1 (293 aa).

3 helical membrane passes run 1-23 (MTGLYELVWRVLHALLCLHRTLT), 35-56 (WIWRRCCRAASAAVLAPLGFTL), and 117-135 (IASLVVWCMAVGISYISVY). 2 N-linked (GlcNAc...) asparagine glycosylation sites follow: Asn-144 and Asn-271. An RXG motif; crucial for prenyltransferase activity motif is present at residues 290–292 (RLG). Residues Leu-291 and Gly-292 each contribute to the isopentenyl diphosphate site.

The protein belongs to the UPP synthase family. As to quaternary structure, the active dehydrodolichyl diphosphate synthase complex is a heterotetramer composed of a dimer of heterodimer of DHDDS and NUS1. Interacts with NPC2. The cofactor is Mg(2+).

The protein resides in the endoplasmic reticulum membrane. The catalysed reaction is n isopentenyl diphosphate + (2E,6E)-farnesyl diphosphate = a di-trans,poly-cis-polyprenyl diphosphate + n diphosphate. Its pathway is protein modification; protein glycosylation. It participates in lipid metabolism. Activated by phospholipids including cardiolipin, phosphatidylcholine, phosphatidylethanolamine, phosphatidylinositol and phosphatidylserine. In terms of biological role, with DHDDS, forms the dehydrodolichyl diphosphate synthase (DDS) complex, an essential component of the dolichol monophosphate (Dol-P) biosynthetic machinery. Both subunits contribute to enzymatic activity, i.e. condensation of multiple copies of isopentenyl pyrophosphate (IPP) to farnesyl pyrophosphate (FPP) to produce dehydrodolichyl diphosphate (Dedol-PP), a precursor of dolichol phosphate which is utilized as a sugar carrier in protein glycosylation in the endoplasmic reticulum (ER). Synthesizes long-chain polyprenols, mostly of C95 and C100 chain length. Regulates the glycosylation and stability of nascent NPC2, thereby promoting trafficking of LDL-derived cholesterol. Acts as a specific receptor for the N-terminus of Nogo-B, a neural and cardiovascular regulator. This Homo sapiens (Human) protein is Dehydrodolichyl diphosphate synthase complex subunit NUS1.